The following is a 510-amino-acid chain: 2,3-bisphosphoglycerate-independent phosphoglycerate mutase (510 aa).

Mn(2+) is bound by residues aspartate 14 and serine 64. Serine 64 acts as the Phosphoserine intermediate in catalysis. Residues histidine 125, 155–156, arginine 187, arginine 193, 259–262, and lysine 332 contribute to the substrate site; these read RD and RADR. Residues aspartate 399, histidine 403, aspartate 440, histidine 441, and histidine 459 each contribute to the Mn(2+) site.

This sequence belongs to the BPG-independent phosphoglycerate mutase family. Monomer. Mn(2+) serves as cofactor.

The enzyme catalyses (2R)-2-phosphoglycerate = (2R)-3-phosphoglycerate. It participates in carbohydrate degradation; glycolysis; pyruvate from D-glyceraldehyde 3-phosphate: step 3/5. In terms of biological role, catalyzes the interconversion of 2-phosphoglycerate and 3-phosphoglycerate. Essential for the growth and pathogenicity on the host plant. This is 2,3-bisphosphoglycerate-independent phosphoglycerate mutase from Pseudomonas syringae pv. tomato (strain ATCC BAA-871 / DC3000).